Reading from the N-terminus, the 471-residue chain is F-box only protein 3 (471 aa).

Positions 10–56 constitute an F-box domain; that stretch reads PLTLESLPTDPLLLILSFLDYRDLINCCYVSRRLSQLSSHDPLWRRH. An ApaG domain is found at 278 to 408; the sequence is VATTGDITVS…FHMACPTFRV (131 aa). Over residues 419–451 the composition is skewed to acidic residues; sequence EYEEMEEEEEEEEEEDEDDDSADMDESDEDDEE. The interval 419-455 is disordered; it reads EYEEMEEEEEEEEEEDEDDDSADMDESDEDDEEERRR.

In terms of assembly, part of a SCF (SKP1-cullin-F-box) protein ligase complex SCF(FBXO3) consisting of FBXO3, SKP1, CUL1 and RBX1. Interacts with PML, interaction is direct and takes place either alone or within the SCF complex. (Microbial infection) Interacts (via ApaG domain) with Rift valley fever virus NSs helical filament; this interaction forms a filamentous E3 which mediates degradation of TFIIH complex through interaction with GT2H1.

The protein localises to the nucleus. It participates in protein modification; protein ubiquitination. Its function is as follows. Substrate recognition component of the SCF (SKP1-CUL1-F-box protein)-type E3 ubiquitin ligase complex, SCF(FBXO3), which mediates the ubiquitination and subsequent proteasomal degradation of target proteins. Mediates the ubiquitination of HIPK2 and probably that of EP300, leading to rapid degradation by the proteasome. In the presence of PML, HIPK2 ubiquitination still occurs, but degradation is prevented. PML, HIPK2 and FBXO3 may act synergically to activate p53/TP53-dependent transactivation. The SCF(FBXO3) also acts as a regulator of inflammation by mediating ubiquitination and degradation of FBXL2 in response to lipopolysaccharide (LPS). The SCF(FBXO3) complex specifically recognizes FBXL2 phosphorylated at 'Thr-404' and promotes its ubiquitination. (Microbial infection) Associates with the Rift valley fever virus NSs to form a remodeled E3 ligase that triggers efficient proteasomal degradation of targeted proteins. The filamentous E3 ligase targets the TFIIH complex leading to robust inhibition of antiviral immunity and enhances viral pathogenesis. The sequence is that of F-box only protein 3 from Homo sapiens (Human).